The following is a 117-amino-acid chain: Hemerythrin subunit beta (117 aa).

Fe cation contacts are provided by H24, H53, E57, H72, H76, H105, and D110.

This sequence belongs to the hemerythrin family. In terms of assembly, octamer composed of two types of chains: alpha and beta.

Hemerythrin is a respiratory protein in blood cells of certain marine worms. The oxygen-binding site in each chain contains two iron atoms. This is Hemerythrin subunit beta from Lingula anatina (Brachiopod).